The sequence spans 535 residues: Bifunctional purine biosynthesis protein PurH (535 aa).

The region spanning 1–145 is the MGS-like domain; the sequence is MAQTALISVS…KNWKDVGVLT (145 aa).

It belongs to the PurH family.

It carries out the reaction (6R)-10-formyltetrahydrofolate + 5-amino-1-(5-phospho-beta-D-ribosyl)imidazole-4-carboxamide = 5-formamido-1-(5-phospho-D-ribosyl)imidazole-4-carboxamide + (6S)-5,6,7,8-tetrahydrofolate. It catalyses the reaction IMP + H2O = 5-formamido-1-(5-phospho-D-ribosyl)imidazole-4-carboxamide. Its pathway is purine metabolism; IMP biosynthesis via de novo pathway; 5-formamido-1-(5-phospho-D-ribosyl)imidazole-4-carboxamide from 5-amino-1-(5-phospho-D-ribosyl)imidazole-4-carboxamide (10-formyl THF route): step 1/1. It participates in purine metabolism; IMP biosynthesis via de novo pathway; IMP from 5-formamido-1-(5-phospho-D-ribosyl)imidazole-4-carboxamide: step 1/1. The sequence is that of Bifunctional purine biosynthesis protein PurH from Variovorax paradoxus (strain S110).